Here is a 206-residue protein sequence, read N- to C-terminus: MNRTKSSKRWLQEHFDDVYVKKAQAEGYRSRAVYKLKEIDDKESLIKPGMTVVDLGAAPGGWTQYASEKMRGSGRLVALDILPMDALPNVEFILGDFREDNVLQELINLIPQRTLDLLLSDMAPNMSGSSAIDIPRAMYLVELAFDFAEKMLKPGGNMLVKIFHGSGFDELVKQARASFEKVVIRKPSASRSRSKETYLLAKGYNL.

Residues Gly-60, Trp-62, Asp-80, Asp-96, and Asp-121 each contribute to the S-adenosyl-L-methionine site. Lys-161 (proton acceptor) is an active-site residue.

This sequence belongs to the class I-like SAM-binding methyltransferase superfamily. RNA methyltransferase RlmE family.

It is found in the cytoplasm. It carries out the reaction uridine(2552) in 23S rRNA + S-adenosyl-L-methionine = 2'-O-methyluridine(2552) in 23S rRNA + S-adenosyl-L-homocysteine + H(+). Its function is as follows. Specifically methylates the uridine in position 2552 of 23S rRNA at the 2'-O position of the ribose in the fully assembled 50S ribosomal subunit. This Legionella pneumophila (strain Paris) protein is Ribosomal RNA large subunit methyltransferase E.